Reading from the N-terminus, the 181-residue chain is FMN reductase (NADH) RutF (181 aa).

The protein belongs to the non-flavoprotein flavin reductase family. RutF subfamily.

The catalysed reaction is FMNH2 + NAD(+) = FMN + NADH + 2 H(+). Catalyzes the reduction of FMN to FMNH2 which is used to reduce pyrimidine by RutA via the Rut pathway. The protein is FMN reductase (NADH) RutF of Ancylobacter novellus (strain ATCC 8093 / DSM 506 / JCM 20403 / CCM 1077 / IAM 12100 / NBRC 12443 / NCIMB 10456) (Starkeya novella).